The sequence spans 144 residues: Augurin-B (144 aa).

Residues 1–18 form the signal peptide; sequence MSLHSLCVPTILLISVLS. The propeptide occupies 19–68; that stretch reads ICLSSGGSSDSKLHRILIKRDAKEIESRPKAYISVQQSKAKEFLSGLHRT. The interval 109–144 is disordered; the sequence is RSNDQGRQHHHDENAPMSQQDPRYNRHGANVNYDYY. Residues 112–122 show a composition bias toward basic and acidic residues; that stretch reads DQGRQHHHDEN.

This sequence belongs to the augurin family.

It localises to the secreted. The protein resides in the cytoplasm. Its subcellular location is the apical cell membrane. In terms of biological role, probable hormone. Required for the proper formation of the central nervous system by attenuating cell proliferation during development. This Danio rerio (Zebrafish) protein is Augurin-B.